The chain runs to 848 residues: Xylosyltransferase (848 aa).

Residues 1 to 14 are Cytoplasmic-facing; that stretch reads MSLHRTLRRFLRKW. The chain crosses the membrane as a helical; Signal-anchor for type II membrane protein span at residues 15-35; that stretch reads KALVYAVSFILLIQAFFTFQS. The Lumenal portion of the chain corresponds to 36 to 843; that stretch reads SPNLMEEEHL…PKTELISVKP (808 aa). 4 cysteine pairs are disulfide-bonded: Cys145–Cys173, Cys189–Cys427, Cys446–Cys459, and Cys448–Cys457. Residues Val219, Asp247, and 276–278 contribute to the UDP-alpha-D-xylose site; that span reads TIW. Residue Asn306 is glycosylated (N-linked (GlcNAc...) asparagine). UDP-alpha-D-xylose is bound at residue 379-380; that stretch reads DW. Residues Ser460 and 482–483 each bind UDP-alpha-D-xylose; that span reads RK. 2 disulfides stabilise this stretch: Cys529-Cys811 and Cys794-Cys822. N-linked (GlcNAc...) asparagine glycosylation is present at Asn530. Residues 824–848 form a disordered region; the sequence is NTNWSSLSPDPKTELISVKPDGRIR. N-linked (GlcNAc...) asparagine glycosylation is present at Asn826.

The protein belongs to the glycosyltransferase 14 family. XylT subfamily. A divalent metal cation serves as cofactor.

It is found in the endoplasmic reticulum membrane. The protein localises to the golgi apparatus membrane. The enzyme catalyses UDP-alpha-D-xylose + L-seryl-[protein] = 3-O-(beta-D-xylosyl)-L-seryl-[protein] + UDP + H(+). It participates in glycan metabolism; chondroitin sulfate biosynthesis. Its pathway is glycan metabolism; heparan sulfate biosynthesis. In terms of biological role, catalyzes the first step in biosynthesis of glycosaminoglycan. Transfers D-xylose from UDP-D-xylose to specific serine residues of the core protein. Initial enzyme in the biosynthesis of chondroitin sulfate and dermatan sulfate proteoglycans in fibroblasts and chondrocytes. This Ciona intestinalis (Transparent sea squirt) protein is Xylosyltransferase (xt).